A 353-amino-acid chain; its full sequence is Heterogeneous nuclear ribonucleoproteins A2/B1 (353 aa).

Residue M1 is modified to N-acetylmethionine. T4 bears the Phosphothreonine mark. Positions 9-15 (PLERKKR) match the Nuclear localization signal motif. RRM domains lie at 21-104 (RKLF…ESGK) and 112-191 (KKLF…LSRQ). K22 participates in a covalent cross-link: Glycyl lysine isopeptide (Lys-Gly) (interchain with G-Cter in SUMO2). S29 is modified (phosphoserine). An Omega-N-methylarginine modification is found at R38. S85 bears the Phosphoserine mark. Residue K104 is modified to N6,N6-dimethyllysine; alternate. K104 participates in a covalent cross-link: Glycyl lysine isopeptide (Lys-Gly) (interchain with G-Cter in SUMO2); alternate. Residues K112, K120, and K137 each participate in a glycyl lysine isopeptide (Lys-Gly) (interchain with G-Cter in SUMO2) cross-link. T140 is modified (phosphothreonine). S149 carries the phosphoserine modification. Residue K152 forms a Glycyl lysine isopeptide (Lys-Gly) (interchain with G-Cter in SUMO2) linkage. T159 is subject to Phosphothreonine. Glycyl lysine isopeptide (Lys-Gly) (interchain with G-Cter in SUMO2); alternate cross-links involve residues K168 and K173. Residues K168 and K173 each carry the N6-acetyllysine; alternate modification. Position 176 is a phosphothreonine (T176). K186 participates in a covalent cross-link: Glycyl lysine isopeptide (Lys-Gly) (interchain with G-Cter in SUMO2). S189 and S201 each carry phosphoserine. The tract at residues 193-353 (MQEVQSSRSG…SGGYGGRSRY (161 aa)) is disordered. The span at 202–223 (GRGGNFGFGDSRGGGGNFGPGP) shows a compositional bias: gly residues. The residue at position 203 (R203) is an Asymmetric dimethylarginine; alternate. R203 is modified (dimethylated arginine; alternate). R203 bears the Omega-N-methylarginine; alternate mark. S212 is modified (phosphoserine). R213 is subject to Asymmetric dimethylarginine; alternate. A Dimethylated arginine; alternate modification is found at R213. Position 213 is an omega-N-methylarginine; alternate (R213). S225 carries the post-translational modification Phosphoserine. R228 carries the omega-N-methylarginine modification. Residues S231 and S236 each carry the phosphoserine modification. At R238 the chain carries Omega-N-methylarginine. S259 carries the phosphoserine modification. The residue at position 266 (R266) is an Asymmetric dimethylarginine; alternate. R266 is modified (omega-N-methylarginine; alternate). The interval 308 to 347 (QQPSNYGPMKSGNFGGSRNMGGPYGGGNYGPGGSGGSGGY) is nuclear targeting sequence. The span at 320–353 (NFGGSRNMGGPYGGGNYGPGGSGGSGGYGGRSRY) shows a compositional bias: gly residues. A Phosphoserine modification is found at S324. Residue R325 is modified to Omega-N-methylarginine. Y331 carries the phosphotyrosine modification. A phosphoserine mark is found at S341 and S344. A Phosphotyrosine modification is found at Y347. Residue R350 is modified to Omega-N-methylarginine.

As to quaternary structure, homodimer; dimerization is required for nucleocytoplasmic translocation. Identified in the spliceosome C complex. Identified in a IGF2BP1-dependent mRNP granule complex containing untranslated mRNAs. Interacts with IGF2BP1. Interacts with C9orf72. Interacts with DGCR8. Interacts with TARDBP. Interacts with CKAP5. Interacts with TBK1. Interacts with STING1. Interacts with SRC. Interacts with PPIA/CYPA. Interacts (via C-terminus) with FAM76B; the interaction results in retention of HNRNPA2B1 in the nucleus and inhibition of the NF-kappa-B-mediated inflammatory pathway. Interacts with NF-kappa-B inhibitors NFKBIA and NFKBIE; the interaction may be mediated by the RRM2 domain of HNRNPA2B1, and HNRNPA2B1 may interact simultaneously with FAM76B and either NFKBIA or NFKBIE to form a complex. Asymmetric dimethylation at Arg-266 constitutes the major methylation site. According to a report, methylation affects subcellular location and promotes nuclear localization. According to another report, methylation at Arg-266 does not influence nucleocytoplasmic shuttling. Post-translationally, sumoylated in exosomes, promoting miRNAs-binding. As to expression, in the brain, isoform A2 and isoform B1 are abundant in large ganglion-type neurons, such as Purkinje cells, and are less abundant in neighboring glia cells. Isoform A2 is more abundant than isoform B1 in brain. In testis, isoform A2 and isoform B1 are present in spermatogonia and spermatocytes, but not in spermatids or sperm. Isoform A2 is more abundant in the adrenal medulla than in the cortical cells. Isoform B1 is found in both adrenal medulla and cortical cells. Isoform A2 is more abundant than isoform B1 in the adrenal gland. Isoform A2 and isoform B1 are both detected in pancreas and kidney, and at lower levels in heart and lung. Isoform B1 is more abundant than isoform A2 in heart, lung and intestine (at protein level). Isoform A2b and isoform B1b are testis-specific.

It localises to the nucleus. The protein localises to the cytoplasm. The protein resides in the nucleoplasm. It is found in the cytoplasmic granule. Its subcellular location is the secreted. It localises to the extracellular exosome. In terms of biological role, heterogeneous nuclear ribonucleoprotein (hnRNP) that associates with nascent pre-mRNAs, packaging them into hnRNP particles. The hnRNP particle arrangement on nascent hnRNA is non-random and sequence-dependent and serves to condense and stabilize the transcripts and minimize tangling and knotting. Packaging plays a role in various processes such as transcription, pre-mRNA processing, RNA nuclear export, subcellular location, mRNA translation and stability of mature mRNAs. Forms hnRNP particles with at least 20 other different hnRNP and heterogeneous nuclear RNA in the nucleus. Involved in transport of specific mRNAs to the cytoplasm in oligodendrocytes and neurons: acts by specifically recognizing and binding the A2RE (21 nucleotide hnRNP A2 response element) or the A2RE11 (derivative 11 nucleotide oligonucleotide) sequence motifs present on some mRNAs, and promotes their transport to the cytoplasm. Specifically binds single-stranded telomeric DNA sequences, protecting telomeric DNA repeat against endonuclease digestion. Also binds other RNA molecules, such as primary miRNA (pri-miRNAs): acts as a nuclear 'reader' of the N6-methyladenosine (m6A) mark by specifically recognizing and binding a subset of nuclear m6A-containing pri-miRNAs. Binding to m6A-containing pri-miRNAs promotes pri-miRNA processing by enhancing binding of DGCR8 to pri-miRNA transcripts. Involved in miRNA sorting into exosomes following sumoylation, possibly by binding (m6A)-containing pre-miRNAs. Acts as a regulator of efficiency of mRNA splicing, possibly by binding to m6A-containing pre-mRNAs. Plays a role in the splicing of pyruvate kinase PKM by binding repressively to sequences flanking PKM exon 9, inhibiting exon 9 inclusion and resulting in exon 10 inclusion and production of the PKM M2 isoform. Also plays a role in the activation of the innate immune response. Mechanistically, senses the presence of viral DNA in the nucleus, homodimerizes and is demethylated by JMJD6. In turn, translocates to the cytoplasm where it activates the TBK1-IRF3 pathway, leading to interferon alpha/beta production. This Rattus norvegicus (Rat) protein is Heterogeneous nuclear ribonucleoproteins A2/B1.